A 426-amino-acid polypeptide reads, in one-letter code: Synaptotagmin-13 (426 aa).

At 1 to 6 the chain is on the vesicular side; sequence MVLSVP. A helical membrane pass occupies residues 7–29; it reads VIALGATLGTATSILALCGVTCL. At 30 to 426 the chain is on the cytoplasmic side; sequence CRHMHPKKGL…QIAMWHQLHL (397 aa). 2 consecutive C2 domains span residues 158–275 and 287–422; these read QAPK…AQWG and GTGE…AMWH.

It belongs to the synaptotagmin family. In terms of assembly, interacts with NRXN1. As to expression, expressed in brain, spleen, kidney and testis.

Its subcellular location is the membrane. Its function is as follows. May be involved in transport vesicle docking to the plasma membrane. The polypeptide is Synaptotagmin-13 (Syt13) (Rattus norvegicus (Rat)).